The sequence spans 208 residues: Probable nicotinate-nucleotide adenylyltransferase (208 aa).

The protein belongs to the NadD family.

The enzyme catalyses nicotinate beta-D-ribonucleotide + ATP + H(+) = deamido-NAD(+) + diphosphate. Its pathway is cofactor biosynthesis; NAD(+) biosynthesis; deamido-NAD(+) from nicotinate D-ribonucleotide: step 1/1. Functionally, catalyzes the reversible adenylation of nicotinate mononucleotide (NaMN) to nicotinic acid adenine dinucleotide (NaAD). The chain is Probable nicotinate-nucleotide adenylyltransferase from Kineococcus radiotolerans (strain ATCC BAA-149 / DSM 14245 / SRS30216).